A 38-amino-acid chain; its full sequence is Photosystem II reaction center protein L (38 aa).

Residues 17–37 (SLFWGLLLIFVLAVLFSSYFF) traverse the membrane as a helical segment.

The protein belongs to the PsbL family. PSII is composed of 1 copy each of membrane proteins PsbA, PsbB, PsbC, PsbD, PsbE, PsbF, PsbH, PsbI, PsbJ, PsbK, PsbL, PsbM, PsbT, PsbY, PsbZ, Psb30/Ycf12, at least 3 peripheral proteins of the oxygen-evolving complex and a large number of cofactors. It forms dimeric complexes.

The protein resides in the plastid. Its subcellular location is the chloroplast thylakoid membrane. In terms of biological role, one of the components of the core complex of photosystem II (PSII). PSII is a light-driven water:plastoquinone oxidoreductase that uses light energy to abstract electrons from H(2)O, generating O(2) and a proton gradient subsequently used for ATP formation. It consists of a core antenna complex that captures photons, and an electron transfer chain that converts photonic excitation into a charge separation. This subunit is found at the monomer-monomer interface and is required for correct PSII assembly and/or dimerization. The chain is Photosystem II reaction center protein L from Cyanidium caldarium (Red alga).